The primary structure comprises 247 residues: Small ribosomal subunit protein uS3 (247 aa).

In terms of domain architecture, KH type-2 spans 18-87; that stretch reads IDEYLAKRFY…NPQITVRRVE (70 aa). The segment at 226 to 247 is disordered; it reads QQGEVVGEAPNTPLEEQGQKQG.

Belongs to the universal ribosomal protein uS3 family. Part of the 30S ribosomal subunit.

Its function is as follows. Binds the lower part of the 30S subunit head. This Hyperthermus butylicus (strain DSM 5456 / JCM 9403 / PLM1-5) protein is Small ribosomal subunit protein uS3.